A 313-amino-acid chain; its full sequence is Malate dehydrogenase (313 aa).

NAD(+) is bound by residues 11–16 and Asp35; that span reads GAGNIG. Residues Arg86 and Arg92 each coordinate substrate. Residues Asn99 and 122–124 contribute to the NAD(+) site; that span reads ISN. Residues Asn124 and Arg155 each coordinate substrate. The Proton acceptor role is filled by His179.

This sequence belongs to the LDH/MDH superfamily. MDH type 3 family.

The enzyme catalyses (S)-malate + NAD(+) = oxaloacetate + NADH + H(+). Its function is as follows. Catalyzes the reversible oxidation of malate to oxaloacetate. The protein is Malate dehydrogenase of Sorangium cellulosum (strain So ce56) (Polyangium cellulosum (strain So ce56)).